Consider the following 312-residue polypeptide: Malate dehydrogenase (312 aa).

NAD(+) contacts are provided by residues 12–17 (GSGFTG) and aspartate 36. Arginine 87 and arginine 93 together coordinate substrate. NAD(+) is bound by residues asparagine 100 and 123–125 (LTN). Asparagine 125 is a substrate binding site. Residue serine 149 is modified to Phosphoserine. Position 156 (arginine 156) interacts with substrate. Histidine 180 functions as the Proton acceptor in the catalytic mechanism.

Belongs to the LDH/MDH superfamily. MDH type 3 family.

It carries out the reaction (S)-malate + NAD(+) = oxaloacetate + NADH + H(+). Catalyzes the reversible oxidation of malate to oxaloacetate. This is Malate dehydrogenase from Oceanobacillus iheyensis (strain DSM 14371 / CIP 107618 / JCM 11309 / KCTC 3954 / HTE831).